The following is a 507-amino-acid chain: Lysine--tRNA ligase (507 aa).

Mg(2+)-binding residues include glutamate 416 and glutamate 423.

Belongs to the class-II aminoacyl-tRNA synthetase family. Homodimer. Mg(2+) serves as cofactor.

The protein localises to the cytoplasm. The enzyme catalyses tRNA(Lys) + L-lysine + ATP = L-lysyl-tRNA(Lys) + AMP + diphosphate. This chain is Lysine--tRNA ligase, found in Hahella chejuensis (strain KCTC 2396).